We begin with the raw amino-acid sequence, 406 residues long: Calsequestrin-2 (406 aa).

Positions 1-19 (MKATCWILAGFCLLFCCKA) are cleaved as a signal peptide. An N-linked (GlcNAc...) asparagine glycan is attached at asparagine 335. The interval 365–406 (VLSGKINTEDDDDDDDDDDDDDDDDDDDDDDDDDDDDDDDDD) is disordered. Positions 373 to 406 (EDDDDDDDDDDDDDDDDDDDDDDDDDDDDDDDDD) are enriched in acidic residues.

Belongs to the calsequestrin family. As to expression, skeletal and heart muscle.

The protein localises to the sarcoplasmic reticulum lumen. Its function is as follows. Calsequestrin is a high-capacity, moderate affinity, calcium-binding protein and thus acts as an internal calcium store in muscle. Calcium ions are bound by clusters of acidic residues at the protein surface, especially at the interface between subunits. Can bind around 60 Ca(2+) ions. Regulates the release of lumenal Ca(2+) via the calcium release channel RYR2; this plays an important role in triggering muscle contraction. Plays a role in excitation-contraction coupling in the heart and in regulating the rate of heart beats. This chain is Calsequestrin-2 (CASQ2), found in Gallus gallus (Chicken).